Here is a 324-residue protein sequence, read N- to C-terminus: Methyltransferase pytC (324 aa).

This sequence belongs to the methyltransferase superfamily. LaeA methyltransferase family.

It functions in the pathway secondary metabolite biosynthesis. Its function is as follows. Methyltransferase; part of the gene cluster that mediates the biosynthesis of pyranterreones, a family of antioxidative compounds. The first step of pyranonigrins biosynthesis is performed by the hybrid PKS-NRPS synthetase pytA that condenses 4 malonyl-CoA units ato the acetyl starter unit by the modular PKS of pytA. The acyl chain is then connected to an L-serine through the amide bond by the modular NRPS of pytA. A tetramic acid is formed and released from the PKS-NRPS pytA to give pyranterreone 5 with the help of the thioesterase pytI. Pyranterreone 5 could be methylated by pytC to afford pyranterreone 6. Both pyranterreones 5 and 6 are subsequently oxidized by the FAD-linked oxidoreductase pytB and the cytochrome P450 monooxygenase pytD to form the fused gamma-pyrone core, resulting in pyranterreones 7 and 11, respectively. The hydroxy group at C-8 of pyranterreones 7 and 11 are dehydrated by the aspartyl protease pytH to form a delta-7 double bond to give pyranterreones 3 and 1, 2 accordingly. The exo-methylene of pyranterreone 3 could be reduced into a pendant methyl by reductase pytE to provide pyranterreone 4, also known as cordylactam. Pyranterreone 4 can be reconverted to pyranterreone 3 through pytB-catalyzed dehydrogenation or further oxidized to pyranterreones 9 and 10. The chain is Methyltransferase pytC from Aspergillus terreus (strain NIH 2624 / FGSC A1156).